The chain runs to 69 residues: Snake venom metalloproteinase BnP2 (69 aa).

One can recognise a Peptidase M12B domain in the interval 1 to 69 (YIELAVVADH…EWRERDIIPR (69 aa)). E3 is a Ca(2+) binding site.

This sequence belongs to the venom metalloproteinase (M12B) family. P-I subfamily. In terms of assembly, monomer. Zn(2+) serves as cofactor. Expressed by the venom gland.

The protein localises to the secreted. Inhibited by EDTA. Its function is as follows. This protein is a zinc protease from snake venom that is devoid of significant myotoxic and hemorrhagic activities. It hydrolyzes the Aalpha-chain and more slowly the Bbeta-chain of fibrin and fibrinogen, without affecting the gamma-chains. It induces cell detachment and a apoptosis (anoikis) in endothelial cells. This Bothrops pauloensis (Neuwied's lancehead) protein is Snake venom metalloproteinase BnP2.